The chain runs to 315 residues: Bifunctional pinoresinol-lariciresinol reductase (315 aa).

Residues 14–20 (GGTGYLG), Arg-39, and Lys-48 each bind NADP(+). Catalysis depends on Lys-142, which acts as the Proton acceptor. Arg-146 provides a ligand contact to NADP(+). His-274 provides a ligand contact to substrate.

It belongs to the NmrA-type oxidoreductase family. Isoflavone reductase subfamily. In terms of assembly, dimer.

The catalysed reaction is (+)-lariciresinol + NADP(+) = (+)-pinoresinol + NADPH + H(+). The enzyme catalyses (-)-secoisolariciresinol + NADP(+) = (+)-lariciresinol + NADPH + H(+). In terms of biological role, reductase involved in lignan (-)-hinokinin biosynthesis. Catalyzes the enantioselective conversion of (+)-pinoresinol into (+)-lariciresinol and of (+)-lariciresinol into (-)-secoisolariciresinol. Abstracts the 4R-hydride from the NADPH cofactor during catalysis. Has also a low phenylcoumaran benzylic ether reductase activity. The protein is Bifunctional pinoresinol-lariciresinol reductase (PLR_Lc1) of Linum corymbulosum (Linum).